Consider the following 577-residue polypeptide: Arginine--tRNA ligase (577 aa).

A 'HIGH' region motif is present at residues 122–132 (PNVAKEMHVGH).

It belongs to the class-I aminoacyl-tRNA synthetase family. As to quaternary structure, monomer.

Its subcellular location is the cytoplasm. It catalyses the reaction tRNA(Arg) + L-arginine + ATP = L-arginyl-tRNA(Arg) + AMP + diphosphate. This is Arginine--tRNA ligase from Shigella dysenteriae serotype 1 (strain Sd197).